Here is an 849-residue protein sequence, read N- to C-terminus: Cytosolic phospholipase A2 zeta (849 aa).

Positions 27-145 (EKRGPLWRHW…KCGQPHKHTF (119 aa)) constitute a C2 domain. 5 residues coordinate Ca(2+): aspartate 60, aspartate 66, aspartate 116, aspartate 118, and aspartate 123. The PLA2c domain occupies 306 to 849 (EMSSGDLDLR…RHQARERAGA (544 aa)). Residue serine 395 is the Nucleophile of the active site. The active-site Proton acceptor is the aspartate 680.

The cofactor is Ca(2+). As to expression, expressed in myocardium (at protein level).

It localises to the cytoplasm. It is found in the cytosol. The protein resides in the cell membrane. The protein localises to the mitochondrion. It carries out the reaction a 1,2-diacyl-sn-glycero-3-phosphocholine + H2O = a 1-acyl-sn-glycero-3-phosphocholine + a fatty acid + H(+). The catalysed reaction is a 1-O-alkyl-2-acyl-sn-glycero-3-phosphocholine + H2O = a 1-O-alkyl-sn-glycero-3-phosphocholine + a fatty acid + H(+). It catalyses the reaction 1-hexadecanoyl-2-(9Z-octadecenoyl)-sn-glycero-3-phosphocholine + H2O = 2-(9Z-octadecenoyl)-sn-glycero-3-phosphocholine + hexadecanoate + H(+). The enzyme catalyses 1-hexadecanoyl-2-(9Z,12Z-octadecadienoyl)-sn-glycero-3-phosphocholine + H2O = (9Z,12Z)-octadecadienoate + 1-hexadecanoyl-sn-glycero-3-phosphocholine + H(+). It carries out the reaction 1-hexadecanoyl-2-(5Z,8Z,11Z,14Z-eicosatetraenoyl)-sn-glycero-3-phosphocholine + H2O = 1-hexadecanoyl-sn-glycero-3-phosphocholine + (5Z,8Z,11Z,14Z)-eicosatetraenoate + H(+). The catalysed reaction is 1-hexadecanoyl-2-(9Z,12Z-octadecadienoyl)-sn-glycero-3-phosphoethanolamine + H2O = 1-hexadecanoyl-sn-glycero-3-phosphoethanolamine + (9Z,12Z)-octadecadienoate + H(+). It catalyses the reaction 1-hexadecanoyl-2-(5Z,8Z,11Z,14Z-eicosatetraenoyl)-sn-glycero-3-phosphoethanolamine + H2O = 1-hexadecanoyl-sn-glycero-3-phosphoethanolamine + (5Z,8Z,11Z,14Z)-eicosatetraenoate + H(+). The enzyme catalyses 1-(5Z,8Z,11Z,14Z-eicosatetraenoyl)-2-O-hexadecyl-sn-glycero-3-phosphocholine + H2O = 2-O-hexadecyl-sn-glycero-3-phosphocholine + (5Z,8Z,11Z,14Z)-eicosatetraenoate + H(+). It carries out the reaction 1-O-hexadecyl-2-(5Z,8Z,11Z,14Z)-eicosatetraenoyl-sn-glycero-3-phosphocholine + H2O = 1-O-hexadecyl-sn-glycero-3-phosphocholine + (5Z,8Z,11Z,14Z)-eicosatetraenoate + H(+). The catalysed reaction is 1-hexadecanoyl-sn-glycero-3-phosphocholine + H2O = sn-glycerol 3-phosphocholine + hexadecanoate + H(+). With respect to regulation, stimulated by cytosolic Ca(2+). In terms of biological role, has calcium-dependent phospholipase and lysophospholipase activities with a potential role in membrane lipid remodeling and biosynthesis of lipid mediators. Preferentially hydrolyzes the ester bond of the fatty acyl group attached at sn-2 position of phospholipids (phospholipase A2 activity). Selectively hydrolyzes sn-2 arachidonoyl group from membrane phospholipids, providing the precursor for eicosanoid biosynthesis. In myocardial mitochondria, plays a major role in arachidonate release that is metabolically channeled to the formation of cardioprotective eicosanoids, epoxyeicosatrienoates (EETs). This is Cytosolic phospholipase A2 zeta (PLA2G4F) from Homo sapiens (Human).